Here is a 1222-residue protein sequence, read N- to C-terminus: MLAPRNTETGVHMSQTEADLALRPSPSLTSMGPTRLGPPPRRVRRFSGKAEPRPRSSRPSRRSSVDLGLLSSWSQPASLLPEPPDPPDSAGPMRSPPSNSKEHPEGTWTGAAPVKAADSACPELTVSSGGPGSREPPRVPDAAARERRREQEEKEDTETQAVATSPDGRYLKFDIEIGRGSFKTVYRGLDTDTTVEVAWCELQTRKLSRAERQRFSEEVEMLKGLQHPNIVRFYDSWKSVLRGQVCIVLVTELMTSGTLKTYLRRFREMKPRVLQRWSRQILRGLHFLHSRVPPILHRDLKCDNVFITGPSGSVKIGDLGLATLKRASFAKSVIGTPEFMAPEMYEEKYDEAVDVYAFGMCMLEMATSEYPYSECQNAAQIYRKVTSGTKPNSFYKVKMPEVKEIIEGCIRTDKNERFTIQDLLTHAFFREERGVHVELAEEDDGEKPGLKLWLRMEDARRGGRPRDNQAIEFLFQLGRDAAEEVAQEMVALGLVCEADYQPVARAVRERVAAIQRKREKLRKARELEVLPPDSGPPPATVSMTPGPPSAFPPEPEEPEADQHQSFLFRHASYSSTTSDCETDGYLSSSGFLDASDPALQPPGGMPSSPAEPHLCLPSGFALSIPRSGPGSDFSPGDSYASDAASGLSDMGEGGQMRKNPVKTLRRRPRSRLRVTSVSDQSDRVVECQLQTHNSKMVTFRFDLDGDSPEEIAAAMVYNEFILPSERDGFLSRIREIIQRVETLLKRDAGPSEATEDALSPQEEPAAMPALPGPSDAELQRSISPEQRSWAAFSTSPSSPGTPLSPGTPFSPGTPPVFPCPIFPITSPSCHPYPFSQVSSNPCPQAPSSLLPSSSGASQVPFPSPSLPTSSPLPFSPSYPQVPLHPASLPTCPSPPPLPSTTAAPLLSLASAFSLAVMTVAQSLLSPSPGLLSQSPPAPPGPLPSMPLPLASCDQESLSAQTAETENEASRNPAQPLLGDARLAPISEEGKPQLVGRFQVTSSKEPAEPPLQPASPTLSRSLKLPTPQLTSESSDTEDSAAGGPETREALAESDRAAEGLGVAIDEEKDEGKEPQIGGSSPILSQPSPVWMNYSYSSLCLSSEESESSGEDEEFWAELQNLRQKHLSEVEALQTLQKKEIEDLYSRLGKQPPPGIVAPAAMLSCRQRRLSKGSFPTSRRNSLQRSDLPGPGIMRRNSLSGSSTGSQEQRASKGVTFAGDVGRM.

Over residues 1 to 17 (MLAPRNTETGVHMSQTE) the composition is skewed to polar residues. The tract at residues 1 to 163 (MLAPRNTETG…KEDTETQAVA (163 aa)) is disordered. The residue at position 95 (serine 95) is a Phosphoserine. The span at 135 to 152 (EPPRVPDAAARERRREQE) shows a compositional bias: basic and acidic residues. Glycyl lysine isopeptide (Lys-Gly) (interchain with G-Cter in ubiquitin) cross-links involve residues lysine 154 and lysine 172. The 259-residue stretch at 171 to 429 (LKFDIEIGRG…IQDLLTHAFF (259 aa)) folds into the Protein kinase domain. Serine 181 is a binding site for ATP. Glycyl lysine isopeptide (Lys-Gly) (interchain with G-Cter in ubiquitin) cross-links involve residues lysine 183, lysine 223, and lysine 238. ATP-binding positions include 251-254 (TELM) and lysine 301. The active-site Proton acceptor is aspartate 318. Lysine 325 participates in a covalent cross-link: Glycyl lysine isopeptide (Lys-Gly) (interchain with G-Cter in ubiquitin). Phosphoserine; by autocatalysis is present on residues serine 328 and serine 332. Residues lysine 384, lysine 390, lysine 447, and lysine 451 each participate in a glycyl lysine isopeptide (Lys-Gly) (interchain with G-Cter in ubiquitin) cross-link. A disordered region spans residues 527-562 (LEVLPPDSGPPPATVSMTPGPPSAFPPEPEEPEADQ). Pro residues predominate over residues 533–553 (DSGPPPATVSMTPGPPSAFPP). The interval 554-564 (EPEEPEADQHQ) is interaction with KLHL3. Position 572 is a phosphoserine (serine 572). 5 disordered regions span residues 591 to 612 (FLDA…PAEP), 626 to 679 (RSGP…SVSD), 747 to 809 (DAGP…GTPF), 836 to 873 (QVSS…SPLP), and 927 to 1087 (SPGL…QPSP). Over residues 627–638 (SGPGSDFSPGDS) the composition is skewed to low complexity. A compositionally biased stretch (basic residues) spans 659–672 (NPVKTLRRRPRSRL). Low complexity-rich tracts occupy residues 792-809 (FSTS…GTPF) and 845-873 (APSS…SPLP). Pro residues predominate over residues 935 to 946 (PPAPPGPLPSMP). The span at 953–963 (DQESLSAQTAE) shows a compositional bias: polar residues. Lysine 990 is covalently cross-linked (Glycyl lysine isopeptide (Lys-Gly) (interchain with G-Cter in ubiquitin)). Positions 996-999 (RFQV) match the RFXV motif motif. At serine 1014 the chain carries Phosphoserine. Residues 1044 to 1056 (ETREALAESDRAA) show a composition bias toward basic and acidic residues. Polar residues predominate over residues 1076–1086 (GGSSPILSQPS). Residues lysine 1123, lysine 1136, and lysine 1137 each participate in a glycyl lysine isopeptide (Lys-Gly) (interchain with G-Cter in ubiquitin) cross-link. Positions 1169–1222 (SKGSFPTSRRNSLQRSDLPGPGIMRRNSLSGSSTGSQEQRASKGVTFAGDVGRM) are disordered. 2 stretches are compositionally biased toward polar residues: residues 1172–1183 (SFPTSRRNSLQR) and 1195–1207 (NSLS…SQEQ). The residue at position 1196 (serine 1196) is a Phosphoserine.

It belongs to the protein kinase superfamily. Ser/Thr protein kinase family. WNK subfamily. Interacts with the C-terminal region of KCNJ1. Interacts with WNK1 and WNK3. Interacts with KLHL3. Mg(2+) is required as a cofactor. Post-translationally, autophosphorylated at Ser-328 and Ser-332, promoting its activation. Phosphorylated by WNK1 and WNK3. Phosphorylated at Ser-572 in a MAP3K15/ASK3-dependent process in response to osmotic stress or hypotonic low-chloride stimulation. Ubiquitinated by the BCR(KLHL3) complex, leading to its degradation. Also ubiquitinated by the BCR(KLHL2) complex.

The protein resides in the cell junction. It localises to the tight junction. The enzyme catalyses L-seryl-[protein] + ATP = O-phospho-L-seryl-[protein] + ADP + H(+). It catalyses the reaction L-threonyl-[protein] + ATP = O-phospho-L-threonyl-[protein] + ADP + H(+). Activation requires autophosphorylation of Ser-328 and Ser-332. Autophosphorylation and subsequent activation is inhibited by increases in intracellular ionic strength: Cl(-) potently inhibits WNK4 kinase activity via direct binding. Also inhibited by K(+) ions. Its function is as follows. Serine/threonine-protein kinase component of the WNK4-SPAK/OSR1 kinase cascade, which acts as a key regulator of ion transport in the distal nephron and blood pressure. The WNK4-SPAK/OSR1 kinase cascade is composed of WNK4, which mediates phosphorylation and activation of downstream kinases OXSR1/OSR1 and STK39/SPAK. Following activation, OXSR1/OSR1 and STK39/SPAK catalyze phosphorylation of ion cotransporters, such as SLC12A1/NKCC2, SLC12A2/NKCC1, SLC12A3/NCC, SLC12A5/KCC2 or SLC12A6/KCC3, regulating their activity. Acts as a molecular switch that regulates the balance between renal salt reabsorption and K(+) secretion by modulating the activities of renal transporters and channels, including the Na-Cl cotransporter SLC12A3/NCC and the K(+) channel, KCNJ1/ROMK. Regulates NaCl reabsorption in the distal nephron by activating the thiazide-sensitive Na-Cl cotransporter SLC12A3/NCC in distal convoluted tubule cells of kidney: activates SLC12A3/NCC in a OXSR1/OSR1- and STK39/SPAK-dependent process. Also acts as a scaffold protein independently of its protein kinase activity: negatively regulates cell membrane localization of various transporters and channels (CFTR, KCNJ1/ROMK, SLC4A4, SLC26A9 and TRPV4) by clathrin-dependent endocytosis. Also inhibits the activity of the epithelial Na(+) channel (ENaC) SCNN1A, SCNN1B, SCNN1D in a inase-independent mechanism. May also phosphorylate NEDD4L. This Rattus norvegicus (Rat) protein is Serine/threonine-protein kinase WNK4.